We begin with the raw amino-acid sequence, 310 residues long: GPN-loop GTPase 2 (310 aa).

An N-acetylalanine modification is found at alanine 2. 19–24 contributes to the GTP binding site; the sequence is GSGKTT. The Gly-Pro-Asn (GPN)-loop; involved in dimer interface motif lies at 76 to 78; the sequence is GPN. 178-181 serves as a coordination point for GTP; that stretch reads SKMD.

This sequence belongs to the GPN-loop GTPase family. As to quaternary structure, heterodimers with GPN1 or GPN3. Binds to RNA polymerase II (RNAPII).

Functionally, small GTPase required for proper localization of RNA polymerase II and III (RNAPII and RNAPIII). May act at an RNAP assembly step prior to nuclear import. The chain is GPN-loop GTPase 2 from Rattus norvegicus (Rat).